The primary structure comprises 103 residues: Large ribosomal subunit protein bL21 (103 aa).

This sequence belongs to the bacterial ribosomal protein bL21 family. In terms of assembly, part of the 50S ribosomal subunit. Contacts protein L20.

In terms of biological role, this protein binds to 23S rRNA in the presence of protein L20. This chain is Large ribosomal subunit protein bL21, found in Caldicellulosiruptor saccharolyticus (strain ATCC 43494 / DSM 8903 / Tp8T 6331).